A 406-amino-acid polypeptide reads, in one-letter code: Probable transcription factor FPSE_09188 (406 aa).

The segment at 1 to 72 (MELPTYAVSQ…PKGSSSRCNG (72 aa)) is disordered. The segment covering 7-20 (AVSQSLLASRSVSS) has biased composition (low complexity).

The protein belongs to the bZIP family.

Its subcellular location is the nucleus. Its function is as follows. The two putative transcription factors FPSE_09188 and FPSE_09189 could be responsible for orchestrating expression of the W493 A and B biosynthesis cluster genes. W493 A and B consist of six amino acid residues D-allo-thr, L-Ala, D-Ala, L-Gln, D-Tyr, and L-Val/L-Ile linked to a 3-hydroxy-4-methyltetradecanoic acid polyketide chain. This chain is Probable transcription factor FPSE_09188, found in Fusarium pseudograminearum (strain CS3096) (Wheat and barley crown-rot fungus).